Here is a 616-residue protein sequence, read N- to C-terminus: Prolactin receptor (616 aa).

The signal sequence occupies residues 1 to 24 (MKENVASMIVFLLLLFLNIRLLKG). The Extracellular portion of the chain corresponds to 25-234 (QSPPGKPFIF…QIPNDFTMKD (210 aa)). Fibronectin type-III domains lie at 27–128 (PPGK…VEPD) and 129–229 (PPVN…IPND). Cys-36 and Cys-46 are disulfide-bonded. The N-linked (GlcNAc...) asparagine glycan is linked to Asn-59. Cys-75 and Cys-86 form a disulfide bridge. Asn-104 and Asn-132 each carry an N-linked (GlcNAc...) asparagine glycan. Zn(2+)-binding residues include Asp-211 and His-212. The WSXWS motif motif lies at 215–219 (WSVWS). Residues 235–258 (ITVWIFVAVLSTIICLIMVWAVAL) form a helical membrane-spanning segment. Residues 259–616 (KGYSMVTCIF…DPACFMHSLH (358 aa)) lie on the Cytoplasmic side of the membrane. The short motif at 267 to 275 (IFPPVPGPK) is the Box 1 motif element. Disordered stretches follow at residues 326-375 (MPAH…STFH), 454-492 (QSSK…PKEK), and 568-593 (ESTK…STAP). Over residues 463 to 482 (GEEKATKQREVESSHSKAEQ) the composition is skewed to basic and acidic residues.

This sequence belongs to the type I cytokine receptor family. Type 1 subfamily. As to quaternary structure, interacts with SMARCA1. Interacts with NEK3 and VAV2 and this interaction is prolactin-dependent.

It localises to the membrane. In terms of biological role, this is a receptor for the anterior pituitary hormone prolactin. The chain is Prolactin receptor (PRLR) from Oryctolagus cuniculus (Rabbit).